A 113-amino-acid polypeptide reads, in one-letter code: Large ribosomal subunit protein uL22 (113 aa).

It belongs to the universal ribosomal protein uL22 family. As to quaternary structure, part of the 50S ribosomal subunit.

Functionally, this protein binds specifically to 23S rRNA; its binding is stimulated by other ribosomal proteins, e.g. L4, L17, and L20. It is important during the early stages of 50S assembly. It makes multiple contacts with different domains of the 23S rRNA in the assembled 50S subunit and ribosome. Its function is as follows. The globular domain of the protein is located near the polypeptide exit tunnel on the outside of the subunit, while an extended beta-hairpin is found that lines the wall of the exit tunnel in the center of the 70S ribosome. The sequence is that of Large ribosomal subunit protein uL22 from Mycoplasmopsis synoviae (strain 53) (Mycoplasma synoviae).